A 437-amino-acid polypeptide reads, in one-letter code: Protein PhoH2 (437 aa).

A PINc domain is found at 7–134 (RTYVLDTSVL…LVSKDIPLRV (128 aa)).

This sequence in the N-terminal section; belongs to the PINc/VapC protein family. In the C-terminal section; belongs to the PhoH family. As to quaternary structure, interacts with antitoxin PhoAT. Mg(2+) serves as cofactor.

The enzyme catalyses n ATP + n H2O + wound RNA = n ADP + n phosphate + unwound RNA.. It carries out the reaction ATP + H2O = ADP + phosphate + H(+). It catalyses the reaction GTP + H2O = GDP + phosphate + H(+). In terms of biological role, toxic component of a type II toxin-antitoxin (TA) system. The possible cognate antitoxin is PhoAT; the toxin gene can be expressed in the absence of the antitoxin gene in an endogenous mc(2)155 double deletion. Unwinds and/or cleaves 5'-tailed RNA in vitro that starts with 5'-AC, the reaction requires hydrolyzable ATP; double-stranded (ds)RNA and dsDNA are not unwound or cleaved. Has ATPase and GTPase activities. The polypeptide is Protein PhoH2 (Mycolicibacterium smegmatis (strain ATCC 700084 / mc(2)155) (Mycobacterium smegmatis)).